The chain runs to 338 residues: Glyceraldehyde-3-phosphate dehydrogenase (338 aa).

Residues 12–13 (RI), Asp-34, and Arg-79 contribute to the NAD(+) site. D-glyceraldehyde 3-phosphate-binding positions include 150-152 (SCT), Thr-181, 210-211 (TG), and Arg-233. Cys-151 functions as the Nucleophile in the catalytic mechanism. Asn-316 contributes to the NAD(+) binding site.

It belongs to the glyceraldehyde-3-phosphate dehydrogenase family. Homotetramer.

Its subcellular location is the cytoplasm. The enzyme catalyses D-glyceraldehyde 3-phosphate + phosphate + NAD(+) = (2R)-3-phospho-glyceroyl phosphate + NADH + H(+). The protein operates within carbohydrate degradation; glycolysis; pyruvate from D-glyceraldehyde 3-phosphate: step 1/5. This Phaffia rhodozyma (Yeast) protein is Glyceraldehyde-3-phosphate dehydrogenase (GPD).